Consider the following 232-residue polypeptide: LexA repressor (232 aa).

Positions 36–56 (IREIGDAAGLQSTSSVAYQLK) form a DNA-binding region, H-T-H motif. A compositionally biased stretch (basic and acidic residues) spans 62-86 (GFLRRDPNKPRAVDVRHLPETDNRT). Residues 62–107 (GFLRRDPNKPRAVDVRHLPETDNRTKAGPKAKARPTAGASPQPELA) form a disordered region. Residues serine 156 and lysine 193 each act as for autocatalytic cleavage activity in the active site.

The protein belongs to the peptidase S24 family. Homodimer.

The enzyme catalyses Hydrolysis of Ala-|-Gly bond in repressor LexA.. Functionally, represses a number of genes involved in the response to DNA damage (SOS response), including recA and lexA. In the presence of single-stranded DNA, RecA interacts with LexA causing an autocatalytic cleavage which disrupts the DNA-binding part of LexA, leading to derepression of the SOS regulon and eventually DNA repair. This is LexA repressor from Corynebacterium efficiens (strain DSM 44549 / YS-314 / AJ 12310 / JCM 11189 / NBRC 100395).